A 567-amino-acid chain; its full sequence is UPF0313 protein CTN_0332 (567 aa).

In terms of domain architecture, Radical SAM core spans Lys-288–Lys-560. 3 residues coordinate [4Fe-4S] cluster: Cys-303, Cys-307, and Cys-310.

Belongs to the UPF0313 family. [4Fe-4S] cluster serves as cofactor.

This chain is UPF0313 protein CTN_0332, found in Thermotoga neapolitana (strain ATCC 49049 / DSM 4359 / NBRC 107923 / NS-E).